The sequence spans 192 residues: uncharacterized protein (192 aa).

A disordered region spans residues 168–192 (PLWRKSEAGSRKARTSNSGGPTKRA). A compositionally biased stretch (polar residues) spans 182–192 (TSNSGGPTKRA).

It to A.xylinum IS1268 ORFA.

This is an uncharacterized protein from Sinorhizobium fredii (strain NBRC 101917 / NGR234).